Here is a 275-residue protein sequence, read N- to C-terminus: Probable dual specificity protein phosphatase DDB_G0271350 (275 aa).

Positions 2–143 constitute a Tyrosine-protein phosphatase domain; sequence GISMILDNFL…LCDLELKLTN (142 aa). The active-site Phosphocysteine intermediate is C87.

It belongs to the protein-tyrosine phosphatase family. Non-receptor class dual specificity subfamily.

It catalyses the reaction O-phospho-L-tyrosyl-[protein] + H2O = L-tyrosyl-[protein] + phosphate. The catalysed reaction is O-phospho-L-seryl-[protein] + H2O = L-seryl-[protein] + phosphate. It carries out the reaction O-phospho-L-threonyl-[protein] + H2O = L-threonyl-[protein] + phosphate. Functionally, has a dual specificity toward Ser/Thr and Tyr-containing proteins. The polypeptide is Probable dual specificity protein phosphatase DDB_G0271350 (Dictyostelium discoideum (Social amoeba)).